The following is a 100-amino-acid chain: Urease subunit gamma (100 aa).

This sequence belongs to the urease gamma subunit family. As to quaternary structure, heterotrimer of UreA (gamma), UreB (beta) and UreC (alpha) subunits. Three heterotrimers associate to form the active enzyme.

The protein localises to the cytoplasm. The enzyme catalyses urea + 2 H2O + H(+) = hydrogencarbonate + 2 NH4(+). Its pathway is nitrogen metabolism; urea degradation; CO(2) and NH(3) from urea (urease route): step 1/1. The sequence is that of Urease subunit gamma from Burkholderia ambifaria (strain MC40-6).